Consider the following 716-residue polypeptide: Segment polarity protein dishevelled homolog DVL-3 (716 aa).

Residues 1–82 (MGETKIIYHL…RVVSWLVSAE (82 aa)) enclose the DIX domain. The residue at position 27 (arginine 27) is an Omega-N-methylarginine. Phosphoserine occurs at positions 48 and 125. The tract at residues 85–235 (HPEPAPFCAD…VSRIERSSSF (151 aa)) is disordered. A compositionally biased stretch (basic and acidic residues) spans 142–156 (QRERPRRRDGPEHAA). Residues 175–190 (SSSTLMSSELETTSFF) are compositionally biased toward low complexity. Position 192 is a phosphoserine (serine 192). Residues 199 to 212 (SRFSSSTEQSSASR) are compositionally biased toward low complexity. An Omega-N-methylarginine modification is found at arginine 212. Residues 213–226 (LMRRHKRRRRKQKV) are compositionally biased toward basic residues. The region spanning 249–321 (TVTLNMEKYN…NDDAVRVLRE (73 aa)) is the PDZ domain. Arginine 271 is modified (asymmetric dimethylarginine; by PRMT1; alternate). Symmetric dimethylarginine; by PRMT7; alternate occurs at positions 271 and 342. Omega-N-methylarginine; alternate is present on arginine 342. Threonine 346 carries the phosphothreonine modification. A DEP domain is found at 422–496 (PESGLEVRDR…SEQCYYIFGD (75 aa)). The disordered stretch occupies residues 546-691 (PYNPHPGFPE…PPGRDLASVP (146 aa)). The span at 565 to 581 (ASSQHSEGSRSSGSNRS) shows a compositional bias: low complexity. Basic and acidic residues-rich tracts occupy residues 582–595 (GSDR…KAGD) and 604–622 (ESDH…RAPS). Arginine 614 bears the Symmetric dimethylarginine; by PRMT7 mark. 2 stretches are compositionally biased toward pro residues: residues 653-663 (YGPPGVPPLYG) and 670-682 (TPPP…PGAP). A Phosphoserine modification is found at serine 697. Arginine 698 is modified (omega-N-methylarginine; alternate). Arginine 698 is modified (dimethylated arginine; alternate). The residue at position 700 (serine 700) is a Phosphoserine.

Belongs to the DSH family. In terms of assembly, interacts (via the PDZ domain) with the C-terminal regions of VANGL1 and VANGL2. Interacts (via the region containing both the PDZ and DEP domains) with LRRFIP2; the DIX domain may inhibit this interaction. Interacts with CYLD. Interacts with CEP164 and DAB2. Interacts with DCDC2. Interacts with FOXK1 and FOXK2. Interacts with DAAM2. Ubiquitinated. Deubiquitinated by CYLD, which acts on 'Lys-63'-linked ubiquitin chains. In terms of processing, phosphorylated by CSNK1D. Post-translationally, arginine methylation may function as a switch in regulation of function in Wnt signaling. In terms of tissue distribution, ubiquitous.

It localises to the cytoplasm. Involved in the signal transduction pathway mediated by multiple Wnt genes. The polypeptide is Segment polarity protein dishevelled homolog DVL-3 (Dvl3) (Mus musculus (Mouse)).